A 428-amino-acid polypeptide reads, in one-letter code: C4-dicarboxylate transport protein (428 aa).

Transmembrane regions (helical) follow at residues 8–28, 44–64, 76–96, 142–162, 184–204, 222–242, 326–346, and 352–372; these read SLYFQVLTAIAIGILLGHFYP, LIKMIIAPVIFCTVVTGIAGM, VALLYFEVVSTIALIIGLIIV, IGAFASGNILQVLLFAVLFGF, VIFGIINMIMRLAPIGAFGAM, LIICFYITCILFVVVVLGSIA, IFHQITLLVVLLLSSKGAAGV, and IVLAATISAVGHLPIAGLALI.

Belongs to the dicarboxylate/amino acid:cation symporter (DAACS) (TC 2.A.23) family.

Its subcellular location is the cell inner membrane. Functionally, responsible for the transport of dicarboxylates such as succinate, fumarate, and malate from the periplasm across the membrane. In Enterobacter sp. (strain 638), this protein is C4-dicarboxylate transport protein.